Reading from the N-terminus, the 354-residue chain is (R,R)-butanediol dehydrogenase (354 aa).

In terms of domain architecture, Enoyl reductase (ER) spans 10–350 (GDIRIEDIPE…NNESAVKIIV (341 aa)). The Zn(2+) site is built by C37, H71, and E157.

The protein belongs to the zinc-containing alcohol dehydrogenase family. It depends on Zn(2+) as a cofactor.

The catalysed reaction is (R,R)-butane-2,3-diol + NAD(+) = (R)-acetoin + NADH + H(+). The enzyme catalyses (S)-acetoin + NAD(+) = diacetyl + NADH + H(+). In terms of biological role, NAD-dependent butanediol dehydrogenase which catalyzes the oxidation of (R,R)-butane-2,3-diol to (3R)-acetoin and of meso-butane-2,3-diol to (3S)-acetoin. Preferentially oxidizes (R,R)-butane-2,3-diol, with a catalytic efficiency approximately fourfold higher than with meso-butane-2,3-diol. Shows a very low activity with (S,S)-butane-2,3-diol. Can also catalyze the reduction of (3R/3S)-acetoin and diacetyl in the presence of NADH. The protein is (R,R)-butanediol dehydrogenase of Neisseria gonorrhoeae (strain ATCC 700825 / FA 1090).